A 117-amino-acid polypeptide reads, in one-letter code: Large ribosomal subunit protein uL18 (117 aa).

It belongs to the universal ribosomal protein uL18 family. Part of the 50S ribosomal subunit; part of the 5S rRNA/L5/L18/L25 subcomplex. Contacts the 5S and 23S rRNAs.

This is one of the proteins that bind and probably mediate the attachment of the 5S RNA into the large ribosomal subunit, where it forms part of the central protuberance. The protein is Large ribosomal subunit protein uL18 of Neisseria gonorrhoeae (strain ATCC 700825 / FA 1090).